Here is a 264-residue protein sequence, read N- to C-terminus: Triosephosphate isomerase (264 aa).

A substrate-binding site is contributed by 13–15 (NWK). Histidine 98 acts as the Electrophile in catalysis. Glutamate 170 functions as the Proton acceptor in the catalytic mechanism. Residues glycine 176, serine 216, and 237-238 (GG) contribute to the substrate site.

Belongs to the triosephosphate isomerase family. Homodimer.

Its subcellular location is the cytoplasm. It catalyses the reaction D-glyceraldehyde 3-phosphate = dihydroxyacetone phosphate. Its pathway is carbohydrate biosynthesis; gluconeogenesis. It participates in carbohydrate degradation; glycolysis; D-glyceraldehyde 3-phosphate from glycerone phosphate: step 1/1. Its function is as follows. Involved in the gluconeogenesis. Catalyzes stereospecifically the conversion of dihydroxyacetone phosphate (DHAP) to D-glyceraldehyde-3-phosphate (G3P). The chain is Triosephosphate isomerase from Protochlamydia amoebophila (strain UWE25).